Consider the following 89-residue polypeptide: Small ribosomal subunit protein uS14 (89 aa).

This sequence belongs to the universal ribosomal protein uS14 family. Part of the 30S ribosomal subunit. Contacts proteins S3 and S10.

Functionally, binds 16S rRNA, required for the assembly of 30S particles and may also be responsible for determining the conformation of the 16S rRNA at the A site. The chain is Small ribosomal subunit protein uS14 from Amoebophilus asiaticus (strain 5a2).